Consider the following 556-residue polypeptide: Inositol 1,4,5-trisphosphate receptor-interacting protein (556 aa).

Residues Met-1–Ala-15 form the signal peptide. Residues Ile-16 to Thr-88 lie on the Extracellular side of the membrane. N-linked (GlcNAc...) asparagine glycans are attached at residues Asn-27 and Asn-84. Residues Glu-32–Arg-87 adopt a coiled-coil conformation. The helical transmembrane segment at Ala-89–Trp-107 threads the bilayer. Residues Arg-108 to Leu-556 are Cytoplasmic-facing.

Belongs to the ITPRIP family. Interacts with ITPR.

Its subcellular location is the cell membrane. The protein localises to the nucleus outer membrane. Enhances Ca(2+)-mediated inhibition of inositol 1,4,5-triphosphate receptor (ITPR) Ca(2+) release. The polypeptide is Inositol 1,4,5-trisphosphate receptor-interacting protein (ITPRIP) (Bos taurus (Bovine)).